The chain runs to 1107 residues: Polyphosphatidylinositol phosphatase INP53 (1107 aa).

Positions 142–482 constitute an SAC domain; it reads LKKLLSNGSF…GDQISQIYTG (341 aa). The residue at position 497 (serine 497) is a Phosphoserine. The segment at 926-1107 is disordered; it reads TASSVASSSP…LDSWQPLTPK (182 aa). Low complexity predominate over residues 927–942; that stretch reads ASSVASSSPVSSASAS. Polar residues predominate over residues 943-956; the sequence is LQPVRTQNSSQSRT. At serine 986 the chain carries Phosphoserine. Composition is skewed to polar residues over residues 987–1005, 1020–1038, 1045–1063, and 1097–1107; these read PTPQ…NIQE, FSQN…SPMS, NSAS…QTPT, and TLDSWQPLTPK. Phosphoserine is present on serine 1035. The residue at position 1105 (threonine 1105) is a Phosphothreonine.

This sequence belongs to the synaptojanin family. The protein in the central section; belongs to the inositol 1,4,5-trisphosphate 5-phosphatase family. As to quaternary structure, interacts (via SAC domain) with BSP1; the interaction is direct. Interacts with CHC1.

The protein localises to the cytoplasm. The catalysed reaction is a 1,2-diacyl-sn-glycero-3-phospho-(1D-myo-inositol-4,5-bisphosphate) + H2O = a 1,2-diacyl-sn-glycero-3-phospho-(1D-myo-inositol 4-phosphate) + phosphate. In terms of biological role, dephosphorylates a number of phosphatidylinositols (PIs) like phosphatidylinositol 4,5-bisphosphate (PtdIns(4,5)P2), but also phosphatidylinositol 3-phosphate (PtdIns(3)P), phosphatidylinositol 4-phosphate (PtdIns(4)P), and phosphatidylinositol 3,5-bisphosphate (PtdIns(3,5)P2). Controls the cellular levels and subcellular distribution of phosphatidylinositol 3-phosphate and phosphatidylinositol 4,5-bisphosphate. Plays an essential role in a TGN (trans Golgi network)-to-early endosome pathway. Involved in clathrin-mediated protein sorting at the TGN. The polypeptide is Polyphosphatidylinositol phosphatase INP53 (INP53) (Saccharomyces cerevisiae (strain ATCC 204508 / S288c) (Baker's yeast)).